The following is a 179-amino-acid chain: Dual-action ribosomal maturation protein DarP (179 aa).

Belongs to the DarP family.

Its subcellular location is the cytoplasm. Its function is as follows. Member of a network of 50S ribosomal subunit biogenesis factors which assembles along the 30S-50S interface, preventing incorrect 23S rRNA structures from forming. Promotes peptidyl transferase center (PTC) maturation. The chain is Dual-action ribosomal maturation protein DarP from Aliivibrio fischeri (strain ATCC 700601 / ES114) (Vibrio fischeri).